A 230-amino-acid chain; its full sequence is Demethylmenaquinone methyltransferase (230 aa).

Residues Thr62, Asp80, Asp100–Gly101, and Ser117 each bind S-adenosyl-L-methionine.

It belongs to the class I-like SAM-binding methyltransferase superfamily. MenG/UbiE family.

It catalyses the reaction a 2-demethylmenaquinol + S-adenosyl-L-methionine = a menaquinol + S-adenosyl-L-homocysteine + H(+). It participates in quinol/quinone metabolism; menaquinone biosynthesis; menaquinol from 1,4-dihydroxy-2-naphthoate: step 2/2. In terms of biological role, methyltransferase required for the conversion of demethylmenaquinol (DMKH2) to menaquinol (MKH2). The protein is Demethylmenaquinone methyltransferase of Corynebacterium glutamicum (strain R).